The chain runs to 356 residues: Glycerophosphodiester phosphodiesterase (356 aa).

The N-terminal stretch at 1-20 (MRGTYCVTLWGGVFAALVAG) is a signal peptide. Residue Cys21 is the site of N-palmitoyl cysteine attachment. Cys21 carries the S-diacylglycerol cysteine lipid modification. Residues 25–314 (RMIVAYRGAA…CHVHTVRKET (290 aa)) enclose the GP-PDE domain.

Belongs to the glycerophosphoryl diester phosphodiesterase family. Palmitoylated upon expression of a fusion protein with first 40 residues fused to PhoA in E.coli.

It localises to the cell inner membrane. It catalyses the reaction a sn-glycero-3-phosphodiester + H2O = an alcohol + sn-glycerol 3-phosphate + H(+). Functionally, glycerophosphoryl diester phosphodiesterase hydrolyzes deacylated phospholipids to G3P and the corresponding alcohols. In terms of biological role, binds human IgA, IgD and the Fc portion of IgG but not IgM, which may contribute to evasion of the human immune system. The protein is Glycerophosphodiester phosphodiesterase (glpQ) of Treponema pallidum (strain Nichols).